Reading from the N-terminus, the 147-residue chain is UPF0306 protein KPN78578_35330 (147 aa).

Belongs to the UPF0306 family.

The protein is UPF0306 protein KPN78578_35330 of Klebsiella pneumoniae subsp. pneumoniae (strain ATCC 700721 / MGH 78578).